We begin with the raw amino-acid sequence, 442 residues long: Mimosinase, chloroplastic (442 aa).

The N-terminal 35 residues, 1–35, are a transit peptide targeting the chloroplast; the sequence is MALPSAFLNPFVPSPVTANPRTKFARVGKGFNVSC. Residues Y103, R105, G133, M134, S252, and T254 each coordinate pyridoxal 5'-phosphate. An N6-(pyridoxal phosphate)lysine modification is found at K255.

The protein belongs to the trans-sulfuration enzymes family. In terms of assembly, forms homodimers. May form homotetramers from two homodimers. The cofactor is pyridoxal 5'-phosphate.

The protein resides in the plastid. It localises to the chloroplast. The catalysed reaction is L-mimosine + H2O = 3-hydroxy-4H-pyrid-4-one + pyruvate + NH4(+). The enzyme catalyses L,L-cystathionine + H2O = L-homocysteine + pyruvate + NH4(+). It catalyses the reaction an S-substituted L-cysteine + H2O = a thiol + pyruvate + NH4(+). Functionally, catalyzes the degradation of mimosine, which is a toxic secondary metabolite found in all Mimosa and Leucaena species. Catalyzes the degradation of cystathionine, but seems to have lower preference toward cystathionine over mimosine. The chain is Mimosinase, chloroplastic from Mimosa pudica (Sensitive plant).